A 450-amino-acid polypeptide reads, in one-letter code: Guanine deaminase (450 aa).

The Zn(2+) site is built by His88 and His90. Residues 90-93 (HAPQ), 218-219 (RF), 245-248 (HLSE), and Asp335 each bind substrate. Zn(2+) is bound by residues His245 and Asp335.

This sequence belongs to the metallo-dependent hydrolases superfamily. ATZ/TRZ family. The cofactor is Zn(2+).

It catalyses the reaction guanine + H2O + H(+) = xanthine + NH4(+). It participates in purine metabolism; guanine degradation; xanthine from guanine: step 1/1. In terms of biological role, catalyzes the hydrolytic deamination of guanine, producing xanthine and ammonia. The protein is Guanine deaminase (guaD) of Dictyostelium discoideum (Social amoeba).